We begin with the raw amino-acid sequence, 296 residues long: Pseudouridine-5'-phosphate glycosidase (296 aa).

The active-site Proton donor is Glu-21. Substrate-binding residues include Lys-81 and Val-101. Residue Asp-130 coordinates Mn(2+). A substrate-binding site is contributed by 132-134 (SQD). The active-site Nucleophile is Lys-151.

It belongs to the pseudouridine-5'-phosphate glycosidase family. In terms of assembly, homotrimer. The cofactor is Mn(2+).

It catalyses the reaction D-ribose 5-phosphate + uracil = psi-UMP + H2O. In terms of biological role, catalyzes the reversible cleavage of pseudouridine 5'-phosphate (PsiMP) to ribose 5-phosphate and uracil. Functions biologically in the cleavage direction, as part of a pseudouridine degradation pathway. This is Pseudouridine-5'-phosphate glycosidase from Fervidobacterium nodosum (strain ATCC 35602 / DSM 5306 / Rt17-B1).